The primary structure comprises 413 residues: 2,3-diketo-5-methylthiopentyl-1-phosphate enolase (413 aa).

The active-site Proton acceptor is the Lys98. Substrate is bound by residues Lys147, Lys173 to Glu176, His264, Gly337, and Gly359 to Gly360. Mg(2+) is bound by residues Lys173, Asp175, and Glu176. Lys173 is subject to N6-carboxylysine.

The protein belongs to the RuBisCO large chain family. Type IV subfamily. As to quaternary structure, homodimer. It depends on Mg(2+) as a cofactor.

It catalyses the reaction 5-methylsulfanyl-2,3-dioxopentyl phosphate = 2-hydroxy-5-methylsulfanyl-3-oxopent-1-enyl phosphate. Its pathway is amino-acid biosynthesis; L-methionine biosynthesis via salvage pathway; L-methionine from S-methyl-5-thio-alpha-D-ribose 1-phosphate: step 3/6. In terms of biological role, catalyzes the enolization of 2,3-diketo-5-methylthiopentyl-1-phosphate (DK-MTP-1-P) into 2-hydroxy-3-keto-5-methylthiopentenyl-1-phosphate (HK-MTPenyl-1-P). This is 2,3-diketo-5-methylthiopentyl-1-phosphate enolase (mtnW) from Geobacillus kaustophilus (strain HTA426).